The sequence spans 850 residues: Probable beta-glucosidase J (850 aa).

2 N-linked (GlcNAc...) asparagine glycosylation sites follow: Asn43 and Asn52. The active site involves Asp254. Residues 423–583 form the PA14 domain; sequence TGERGYTFRV…DAETAIKQAV (161 aa). N-linked (GlcNAc...) asparagine glycosylation occurs at Asn508.

Belongs to the glycosyl hydrolase 3 family.

The protein resides in the secreted. It catalyses the reaction Hydrolysis of terminal, non-reducing beta-D-glucosyl residues with release of beta-D-glucose.. The protein operates within glycan metabolism; cellulose degradation. Beta-glucosidases are one of a number of cellulolytic enzymes involved in the degradation of cellulosic biomass. Catalyzes the last step releasing glucose from the inhibitory cellobiose. In Emericella nidulans (strain FGSC A4 / ATCC 38163 / CBS 112.46 / NRRL 194 / M139) (Aspergillus nidulans), this protein is Probable beta-glucosidase J (bglJ).